We begin with the raw amino-acid sequence, 264 residues long: tRNA (guanine-N(1)-)-methyltransferase (264 aa).

S-adenosyl-L-methionine is bound by residues G125 and 145-150 (LGDFVL).

The protein belongs to the RNA methyltransferase TrmD family. As to quaternary structure, homodimer.

It is found in the cytoplasm. The enzyme catalyses guanosine(37) in tRNA + S-adenosyl-L-methionine = N(1)-methylguanosine(37) in tRNA + S-adenosyl-L-homocysteine + H(+). Its function is as follows. Specifically methylates guanosine-37 in various tRNAs. The protein is tRNA (guanine-N(1)-)-methyltransferase of Burkholderia vietnamiensis (strain G4 / LMG 22486) (Burkholderia cepacia (strain R1808)).